Here is a 227-residue protein sequence, read N- to C-terminus: Cytochrome c oxidase subunit 2 (227 aa).

The Mitochondrial intermembrane portion of the chain corresponds to 1–14; sequence MAHPVQLSLQDATS. The helical transmembrane segment at 15-45 threads the bilayer; it reads PIMEELITFHDHAFMAMSLISFLVLYALALT. At 46–59 the chain is on the mitochondrial matrix side; the sequence is LTTKLTNTNITDAQ. The chain crosses the membrane as a helical span at residues 60 to 87; the sequence is EMETIWTILPAVILILIALPSLRVLYLT. Topologically, residues 88 to 227 are mitochondrial intermembrane; the sequence is DEVNDPSLTI…IFEMGPVFTL (140 aa). 6 residues coordinate Cu cation: histidine 161, cysteine 196, glutamate 198, cysteine 200, histidine 204, and methionine 207. Glutamate 198 contacts Mg(2+).

It belongs to the cytochrome c oxidase subunit 2 family. In terms of assembly, component of the cytochrome c oxidase (complex IV, CIV), a multisubunit enzyme composed of 14 subunits. The complex is composed of a catalytic core of 3 subunits MT-CO1, MT-CO2 and MT-CO3, encoded in the mitochondrial DNA, and 11 supernumerary subunits COX4I, COX5A, COX5B, COX6A, COX6B, COX6C, COX7A, COX7B, COX7C, COX8 and NDUFA4, which are encoded in the nuclear genome. The complex exists as a monomer or a dimer and forms supercomplexes (SCs) in the inner mitochondrial membrane with NADH-ubiquinone oxidoreductase (complex I, CI) and ubiquinol-cytochrome c oxidoreductase (cytochrome b-c1 complex, complex III, CIII), resulting in different assemblies (supercomplex SCI(1)III(2)IV(1) and megacomplex MCI(2)III(2)IV(2)). Found in a complex with TMEM177, COA6, COX18, COX20, SCO1 and SCO2. Interacts with TMEM177 in a COX20-dependent manner. Interacts with COX20. Interacts with COX16. Cu cation serves as cofactor.

It is found in the mitochondrion inner membrane. It carries out the reaction 4 Fe(II)-[cytochrome c] + O2 + 8 H(+)(in) = 4 Fe(III)-[cytochrome c] + 2 H2O + 4 H(+)(out). Functionally, component of the cytochrome c oxidase, the last enzyme in the mitochondrial electron transport chain which drives oxidative phosphorylation. The respiratory chain contains 3 multisubunit complexes succinate dehydrogenase (complex II, CII), ubiquinol-cytochrome c oxidoreductase (cytochrome b-c1 complex, complex III, CIII) and cytochrome c oxidase (complex IV, CIV), that cooperate to transfer electrons derived from NADH and succinate to molecular oxygen, creating an electrochemical gradient over the inner membrane that drives transmembrane transport and the ATP synthase. Cytochrome c oxidase is the component of the respiratory chain that catalyzes the reduction of oxygen to water. Electrons originating from reduced cytochrome c in the intermembrane space (IMS) are transferred via the dinuclear copper A center (CU(A)) of subunit 2 and heme A of subunit 1 to the active site in subunit 1, a binuclear center (BNC) formed by heme A3 and copper B (CU(B)). The BNC reduces molecular oxygen to 2 water molecules using 4 electrons from cytochrome c in the IMS and 4 protons from the mitochondrial matrix. In Macaca fascicularis (Crab-eating macaque), this protein is Cytochrome c oxidase subunit 2 (MT-CO2).